The sequence spans 466 residues: Asparagine--tRNA ligase (466 aa).

Belongs to the class-II aminoacyl-tRNA synthetase family. As to quaternary structure, homodimer.

It localises to the cytoplasm. It catalyses the reaction tRNA(Asn) + L-asparagine + ATP = L-asparaginyl-tRNA(Asn) + AMP + diphosphate + H(+). This Myxococcus xanthus (strain DK1622) protein is Asparagine--tRNA ligase.